The sequence spans 395 residues: Flap endonuclease 1 (395 aa).

Residues 1 to 108 form an N-domain region; it reads MGILGLSKLL…DELEMRRQKA (108 aa). Asp-34 is a Mg(2+) binding site. Residue Arg-74 coordinates DNA. Position 90 (Asp-90) interacts with Mg(2+). The interval 116 to 136 is disordered; sequence EKAKDAGDDEMMEKMSKRTVR. Positions 126–257 are I-domain; the sequence is MMEKMSKRTV…QKAWEGIQRY (132 aa). 4 residues coordinate Mg(2+): Glu-162, Glu-164, Asp-183, and Asp-185. DNA is bound at residue Glu-162. Gly-235 and Asp-237 together coordinate DNA. Asp-237 contacts Mg(2+). An interaction with PCNA region spans residues 340-348; the sequence is TQGRLDSFF.

This sequence belongs to the XPG/RAD2 endonuclease family. FEN1 subfamily. Interacts with PCNA. Three molecules of FEN1 bind to one PCNA trimer with each molecule binding to one PCNA monomer. PCNA stimulates the nuclease activity without altering cleavage specificity. It depends on Mg(2+) as a cofactor. Post-translationally, phosphorylated. Phosphorylation upon DNA damage induces relocalization to the nuclear plasma.

The protein resides in the nucleus. The protein localises to the nucleolus. It localises to the nucleoplasm. It is found in the mitochondrion. In terms of biological role, structure-specific nuclease with 5'-flap endonuclease and 5'-3' exonuclease activities involved in DNA replication and repair. During DNA replication, cleaves the 5'-overhanging flap structure that is generated by displacement synthesis when DNA polymerase encounters the 5'-end of a downstream Okazaki fragment. It enters the flap from the 5'-end and then tracks to cleave the flap base, leaving a nick for ligation. Also involved in the long patch base excision repair (LP-BER) pathway, by cleaving within the apurinic/apyrimidinic (AP) site-terminated flap. Acts as a genome stabilization factor that prevents flaps from equilibrating into structures that lead to duplications and deletions. Also possesses 5'-3' exonuclease activity on nicked or gapped double-stranded DNA, and exhibits RNase H activity. Also involved in replication and repair of rDNA and in repairing mitochondrial DNA. The sequence is that of Flap endonuclease 1 from Leishmania major.